Consider the following 354-residue polypeptide: Carbonic anhydrase 12 (354 aa).

A signal peptide spans Met1–Ser24. At Ala25–Ser301 the chain is on the extracellular side. N-linked (GlcNAc...) asparagine glycans are attached at residues Asn28, Asn42, Asn80, and Asn88. Residues Ser30–Phe290 enclose the Alpha-carbonic anhydrase domain. Residues Cys50 and Cys231 are joined by a disulfide bond. His94 functions as the Proton donor/acceptor in the catalytic mechanism. Zn(2+) is bound by residues His120, His122, and His146. Thr227–Thr228 is a binding site for substrate. Residues Leu302–Val322 form a helical membrane-spanning segment. Over Ser323–Ala354 the chain is Cytoplasmic.

It belongs to the alpha-carbonic anhydrase family. In terms of assembly, homodimer. Zn(2+) serves as cofactor.

It localises to the membrane. It is found in the cell membrane. It carries out the reaction hydrogencarbonate + H(+) = CO2 + H2O. With respect to regulation, inhibited by acetazolamide. Reversible hydration of carbon dioxide. This Mus musculus (Mouse) protein is Carbonic anhydrase 12.